The chain runs to 210 residues: Large ribosomal subunit protein uL4 (210 aa).

The segment at 46-85 is disordered; the sequence is QGTASTLTRSEVRGGGRKPYKQKGTGRARQGSIRTPLRPG. Basic residues predominate over residues 60 to 71; sequence GGRKPYKQKGTG.

It belongs to the universal ribosomal protein uL4 family. In terms of assembly, part of the 50S ribosomal subunit.

One of the primary rRNA binding proteins, this protein initially binds near the 5'-end of the 23S rRNA. It is important during the early stages of 50S assembly. It makes multiple contacts with different domains of the 23S rRNA in the assembled 50S subunit and ribosome. In terms of biological role, forms part of the polypeptide exit tunnel. This chain is Large ribosomal subunit protein uL4, found in Prochlorococcus marinus (strain AS9601).